The sequence spans 1872 residues: Chitin synthase 6 (1872 aa).

Residues 1-23 (MAQHLPPVGGNGGAHTQPSLPAL) are disordered. Residues 1–779 (MAQHLPPVGG…CWMEIAQLSD (779 aa)) enclose the Myosin motor domain. Residue 104–111 (GESGSGKT) participates in ATP binding. N-linked (GlcNAc...) asparagine glycosylation is found at Asn-123, Asn-291, Asn-428, and Asn-559. A disordered region spans residues 587–652 (VMQASVSSKP…VNKPSEEGAS (66 aa)). The tract at residues 659-683 (LDNVTKSFHAQNTNAYFVFCLKPND) is actin-binding. N-linked (GlcNAc...) asparagine glycosylation is present at Asn-661. Transmembrane regions (helical) follow at residues 881–901 (WVFI…QHLG) and 920–940 (FIIW…PMLV). The region spanning 944–1003 (QYVFTGEELSAYNGKDGKASYAAIRGQVFDIGSFIPRHPLPYLPSKLFTQYAGTDITGLF) is the Cytochrome b5 heme-binding domain. Residues Asn-1030, Asn-1055, and Asn-1120 are each glycosylated (N-linked (GlcNAc...) asparagine). The helical transmembrane segment at 1193 to 1213 (FILAVTIILCSIIAFKFLAAL) threads the bilayer. Residues Asn-1450 and Asn-1556 are each glycosylated (N-linked (GlcNAc...) asparagine). 3 helical membrane passes run 1581-1601 (FIVF…AYIV), 1614-1634 (VPVL…IIFI), and 1641-1661 (MIAW…GLPL). The region spanning 1814 to 1869 (LPSDDALLAEIREILRTADLMTVTKKGVKQELERRFGVNLDSRRAYINSATEALLS) is the DEK-C domain.

The protein belongs to the chitin synthase family. Class V subfamily.

It is found in the cell membrane. The catalysed reaction is [(1-&gt;4)-N-acetyl-beta-D-glucosaminyl](n) + UDP-N-acetyl-alpha-D-glucosamine = [(1-&gt;4)-N-acetyl-beta-D-glucosaminyl](n+1) + UDP + H(+). Its function is as follows. Polymerizes chitin, a structural polymer of the cell wall and septum, by transferring the sugar moiety of UDP-GlcNAc to the non-reducing end of the growing chitin polymer. Required for appressorium penetration and invasive growth. The protein is Chitin synthase 6 of Pyricularia oryzae (strain 70-15 / ATCC MYA-4617 / FGSC 8958) (Rice blast fungus).